The sequence spans 391 residues: GDP-mannose transporter (391 aa).

Basic and acidic residues predominate over residues 1-11; the sequence is MDDKKNEDVEM. Residues 1–28 are disordered; that stretch reads MDDKKNEDVEMRNFNGRSSPSQRDPFIS. Over 1–44 the chain is Cytoplasmic; the sequence is MDDKKNEDVEMRNFNGRSSPSQRDPFISKPGAAKRGGSSFDLSN. A helical membrane pass occupies residues 45–65; that stretch reads VTNSPGISILAYCLASISMTV. The Lumenal segment spans residues 66 to 75; the sequence is TNKYCVSGSN. Residues 76-96 form a helical membrane-spanning segment; that stretch reads WNLNFFYLAIQSVVCIIAIII. The Cytoplasmic portion of the chain corresponds to 97 to 115; it reads CKQAGLITNLAPFDTKKAK. Residues 116 to 138 form a helical membrane-spanning segment; that stretch reads TWFPISLLLVGMIYTSTKALQFL. Residues 139-141 lie on the Lumenal side of the membrane; the sequence is SVP. The helical transmembrane segment at 142-164 threads the bilayer; the sequence is VYTIFKNLTIIVIAYGEVLWFGG. Residues 165–170 lie on the Cytoplasmic side of the membrane; that stretch reads SVTPSA. A helical transmembrane segment spans residues 171–193; sequence LFSFGLMVLSSVVAAWADIQHAL. Topologically, residues 194–209 are lumenal; it reads YGGGATQTKEAADALS. Residues 210-230 traverse the membrane as a helical segment; that stretch reads TLNAGYAWMGMNVFCTAAYVL. Topologically, residues 231-245 are cytoplasmic; that stretch reads SMRKVIKKMNFKDWD. A helical transmembrane segment spans residues 246–266; that stretch reads TMFYNNLLTIPVLFVCSFVFE. Residues asparagine 267 and asparagine 272 are each glycosylated (N-linked (GlcNAc...) asparagine). The Lumenal portion of the chain corresponds to 267–284; it reads NWSSENLTKNFPLETRNN. The helical transmembrane segment at 285–305 threads the bilayer; the sequence is LILGMIYSGLATIFISYCSAW. Residues 306–313 are Cytoplasmic-facing; the sequence is CIRVTSST. The chain crosses the membrane as a helical span at residues 314–336; the sequence is TYSMVGALNKLPIAVSGLVFFAA. Residues 337 to 339 are Lumenal-facing; it reads PVT. Residues 340–359 form a helical membrane-spanning segment; the sequence is FGSVSAIFIGFVSGIVYAWA. The Cytoplasmic portion of the chain corresponds to 360-391; sequence KVRQNQSKGSVLPTTQPVMSASSQSNRDAAKA. Residues 369–391 are disordered; sequence SVLPTTQPVMSASSQSNRDAAKA.

It belongs to the TPT transporter family. SLC35D subfamily. As to quaternary structure, homooligomer.

It is found in the golgi apparatus membrane. The protein resides in the cytoplasmic vesicle membrane. Its subcellular location is the endoplasmic reticulum membrane. Its function is as follows. Involved in the import of GDP-mannose from the cytoplasm into the Golgi lumen. This chain is GDP-mannose transporter (vrg4), found in Sclerotinia sclerotiorum (strain ATCC 18683 / 1980 / Ss-1) (White mold).